Here is a 132-residue protein sequence, read N- to C-terminus: Glycine cleavage system H protein (132 aa).

The 84-residue stretch at Thr24–Arg107 folds into the Lipoyl-binding domain. The residue at position 65 (Lys65) is an N6-lipoyllysine.

This sequence belongs to the GcvH family. The glycine cleavage system is composed of four proteins: P, T, L and H. The cofactor is (R)-lipoate.

The glycine cleavage system catalyzes the degradation of glycine. The H protein shuttles the methylamine group of glycine from the P protein to the T protein. The sequence is that of Glycine cleavage system H protein from Synechocystis sp. (strain ATCC 27184 / PCC 6803 / Kazusa).